A 798-amino-acid chain; its full sequence is uncharacterized protein (798 aa).

The segment covering 1–13 (MSSSQSPSTPSAS) has biased composition (low complexity). The N-terminal 58 residues, 1–58 (MSSSQSPSTPSASLVDSSDSKHPDDLPQIYKRRSVWTSSEDAVSSSNSPEQTTPFTVR), are a transit peptide targeting the chloroplast. Disordered regions lie at residues 1-99 (MSSS…WQDA), 135-158 (AEKK…SMCT), and 417-473 (TGLI…AEPS). A compositionally biased stretch (polar residues) spans 35-55 (VWTSSEDAVSSSNSPEQTTPF). Residues 57-79 (VREDTNADIARELDLPDDPEPHL) show a composition bias toward basic and acidic residues. Over residues 137–146 (KKKRKKKKKA) the composition is skewed to basic residues. Residues 462 to 473 (AAPAEAQGAEPS) are compositionally biased toward low complexity. A coiled-coil region spans residues 578–658 (RSNMEVAGKL…MLSEARGLRD (81 aa)). The segment at 749–798 (DDLKAPAPEPAPLSPGGHRSVESLADEAGITDQAGSLLPAKDNRPSEDLD) is disordered. Phosphoserine is present on serine 762. Residues 789-798 (KDNRPSEDLD) are compositionally biased toward basic and acidic residues.

The protein resides in the plastid. It is found in the chloroplast. This is an uncharacterized protein from Arabidopsis thaliana (Mouse-ear cress).